A 125-amino-acid polypeptide reads, in one-letter code: Large ribosomal subunit protein bL12 (125 aa).

It belongs to the bacterial ribosomal protein bL12 family. Homodimer. Part of the ribosomal stalk of the 50S ribosomal subunit. Forms a multimeric L10(L12)X complex, where L10 forms an elongated spine to which 2 to 4 L12 dimers bind in a sequential fashion. Binds GTP-bound translation factors.

Forms part of the ribosomal stalk which helps the ribosome interact with GTP-bound translation factors. Is thus essential for accurate translation. The polypeptide is Large ribosomal subunit protein bL12 (Gluconobacter oxydans (strain 621H) (Gluconobacter suboxydans)).